A 163-amino-acid chain; its full sequence is MFSKMFNYFASSSKTHLDNTQESAINCGQHSAEAASYAVKTLPQILLGLITFKEISGSVMTGYAFGFALPEFAKVIVKSLASTIFFHPTASMVGTVAVTVAANSENVVECIKNTAHALYDAGSTVYEGTLCAVNGAAAAATFVYDNVCSTDVQLSGNAIEAVL.

It belongs to the UPF0416 family.

In Rickettsia bellii (strain RML369-C), this protein is UPF0416 protein RBE_1121.